Reading from the N-terminus, the 125-residue chain is Large ribosomal subunit protein bL12 (125 aa).

This sequence belongs to the bacterial ribosomal protein bL12 family. As to quaternary structure, homodimer. Part of the ribosomal stalk of the 50S ribosomal subunit. Forms a multimeric L10(L12)X complex, where L10 forms an elongated spine to which 2 to 4 L12 dimers bind in a sequential fashion. Binds GTP-bound translation factors.

Forms part of the ribosomal stalk which helps the ribosome interact with GTP-bound translation factors. Is thus essential for accurate translation. In Mesorhizobium japonicum (strain LMG 29417 / CECT 9101 / MAFF 303099) (Mesorhizobium loti (strain MAFF 303099)), this protein is Large ribosomal subunit protein bL12.